Reading from the N-terminus, the 139-residue chain is Glucanase inhibitor protein 3 (139 aa).

Residues 1–138 enclose the Peptidase S1 domain; the sequence is VLTLEKPSKF…GIEWINSVIK (138 aa). Intrachain disulfides connect cysteine 61–cysteine 73 and cysteine 83–cysteine 114.

The protein belongs to the peptidase S1 family.

It localises to the secreted. In terms of biological role, secreted effector that suppresses host plant glucan elicitor-mediated defense responses. Targets host endoglucanases and inhibits the endoglucanase-mediated release of elicitor-active glucan oligosaccharides from P.sojae cell walls. This is Glucanase inhibitor protein 3 from Phytophthora sojae (Soybean stem and root rot agent).